Here is a 410-residue protein sequence, read N- to C-terminus: Transforming growth factor beta-3 proprotein (410 aa).

An N-terminal signal peptide occupies residues 1 to 23; that stretch reads MHLQRALVVLALLNLATISLSLS. N-linked (GlcNAc...) asparagine glycans are attached at residues N72, N133, and N140. The Cell attachment site signature appears at 259–261; it reads RGD. Q291 carries the post-translational modification N5-methylglutamine. Intrachain disulfides connect C305/C314, C313/C376, C342/C407, and C346/C409.

It belongs to the TGF-beta family. As to quaternary structure, interacts with ASPN. Latency-associated peptide: Homodimer; disulfide-linked. Latency-associated peptide: Interacts with Transforming growth factor beta-3 (TGF-beta-3) chain; interaction is non-covalent and maintains (TGF-beta-3) in a latent state. Latency-associated peptide: Interacts with LRRC32/GARP; leading to regulate activation of TGF-beta-3 and promote epithelial fusion during palate development. Latency-associated peptide: Interacts (via cell attachment site) with integrins, leading to release of the active TGF-beta-3. Transforming growth factor beta-3: Homodimer; disulfide-linked. Transforming growth factor beta-3: Interacts with TGF-beta receptors (TGFBR1 and TGFBR2), leading to signal transduction. Post-translationally, transforming growth factor beta-3 proprotein: The precursor proprotein is cleaved in the Golgi apparatus to form Transforming growth factor beta-3 (TGF-beta-3) and Latency-associated peptide (LAP) chains, which remain non-covalently linked, rendering TGF-beta-3 inactive. In terms of processing, methylated at Gln-291 by N6AMT1. Expressed in mammary glands with a slight increase in expression prior to lactation and again increasing at the onset of involution, expression peaks at day 3 of involution.

The protein resides in the secreted. The protein localises to the extracellular space. It localises to the extracellular matrix. Functionally, transforming growth factor beta-3 proprotein: Precursor of the Latency-associated peptide (LAP) and Transforming growth factor beta-3 (TGF-beta-3) chains, which constitute the regulatory and active subunit of TGF-beta-3, respectively. In terms of biological role, required to maintain the Transforming growth factor beta-3 (TGF-beta-3) chain in a latent state during storage in extracellular matrix. Associates non-covalently with TGF-beta-3 and regulates its activation via interaction with 'milieu molecules', such as LTBP1 and LRRC32/GARP, that control activation of TGF-beta-3. Interaction with integrins results in distortion of the Latency-associated peptide chain and subsequent release of the active TGF-beta-3. Its function is as follows. Transforming growth factor beta-3: Multifunctional protein that regulates embryogenesis and cell differentiation and is required in various processes such as secondary palate development. Activation into mature form follows different steps: following cleavage of the proprotein in the Golgi apparatus, Latency-associated peptide (LAP) and Transforming growth factor beta-3 (TGF-beta-3) chains remain non-covalently linked rendering TGF-beta-3 inactive during storage in extracellular matrix. At the same time, LAP chain interacts with 'milieu molecules', such as LTBP1 and LRRC32/GARP that control activation of TGF-beta-3 and maintain it in a latent state during storage in extracellular milieus. TGF-beta-3 is released from LAP by integrins: integrin-binding results in distortion of the LAP chain and subsequent release of the active TGF-beta-3. Once activated following release of LAP, TGF-beta-3 acts by binding to TGF-beta receptors (TGFBR1 and TGFBR2), which transduce signal. This Mus musculus (Mouse) protein is Transforming growth factor beta-3 proprotein.